Consider the following 383-residue polypeptide: Acetylornithine deacetylase (383 aa).

H80 serves as a coordination point for Zn(2+). D82 is a catalytic residue. D112 contributes to the Zn(2+) binding site. E144 is an active-site residue. Zn(2+)-binding residues include E145, E169, and H355.

It belongs to the peptidase M20A family. ArgE subfamily. As to quaternary structure, homodimer. Requires Zn(2+) as cofactor. Co(2+) serves as cofactor. The cofactor is glutathione.

Its subcellular location is the cytoplasm. The catalysed reaction is N(2)-acetyl-L-ornithine + H2O = L-ornithine + acetate. It functions in the pathway amino-acid biosynthesis; L-arginine biosynthesis; L-ornithine from N(2)-acetyl-L-ornithine (linear): step 1/1. Catalyzes the hydrolysis of the amide bond of N(2)-acetylated L-amino acids. Cleaves the acetyl group from N-acetyl-L-ornithine to form L-ornithine, an intermediate in L-arginine biosynthesis pathway, and a branchpoint in the synthesis of polyamines. The polypeptide is Acetylornithine deacetylase (Escherichia coli O139:H28 (strain E24377A / ETEC)).